The chain runs to 344 residues: Bifunctional trans-3-hydroxy-L-proline dehydratase/2-epimerase (344 aa).

Residue S90 is the Proton acceptor of the active site. Substrate contacts are provided by residues G91–S92, D252, and G257–T258.

Belongs to the proline racemase family.

The enzyme catalyses trans-3-hydroxy-L-proline = 1-pyrroline-2-carboxylate + H2O. It catalyses the reaction trans-3-hydroxy-L-proline = cis-3-hydroxy-D-proline. Its function is as follows. Bifunctional enzyme catalyzing both the dehydration of trans-3-hydroxy-L-proline (t3LHyp) to Delta(1)-pyrroline-2-carboxylate (Pyr2C) and 2-epimerization of t3LHyp to cis-3-hydroxy-D-proline (c3DHyp). No dehydratase activity with L-proline, trans-4-hydroxy-L-proline (t4LHyp), cis-4-hydroxy-L-proline (c4LHyp), D-proline, cis-4-hydroxy-D-proline (c4DHyp), trans-4-hydroxy-D-proline (t4DHyp) or L-serine as substrates. Displays neither t4LHyp epimerase nor proline racemase activity. Is likely involved in a degradation pathway that converts t3LHyp to L-proline, which would allow P.aeruginosa to grow on t3LHyp as a sole carbon source. The polypeptide is Bifunctional trans-3-hydroxy-L-proline dehydratase/2-epimerase (Pseudomonas aeruginosa (strain ATCC 15692 / DSM 22644 / CIP 104116 / JCM 14847 / LMG 12228 / 1C / PRS 101 / PAO1)).